We begin with the raw amino-acid sequence, 251 residues long: Ubiquinone/menaquinone biosynthesis C-methyltransferase UbiE (251 aa).

Threonine 74, aspartate 92, and serine 132 together coordinate S-adenosyl-L-methionine.

The protein belongs to the class I-like SAM-binding methyltransferase superfamily. MenG/UbiE family.

The catalysed reaction is a 2-demethylmenaquinol + S-adenosyl-L-methionine = a menaquinol + S-adenosyl-L-homocysteine + H(+). It catalyses the reaction a 2-methoxy-6-(all-trans-polyprenyl)benzene-1,4-diol + S-adenosyl-L-methionine = a 5-methoxy-2-methyl-3-(all-trans-polyprenyl)benzene-1,4-diol + S-adenosyl-L-homocysteine + H(+). It functions in the pathway quinol/quinone metabolism; menaquinone biosynthesis; menaquinol from 1,4-dihydroxy-2-naphthoate: step 2/2. Its pathway is cofactor biosynthesis; ubiquinone biosynthesis. Functionally, methyltransferase required for the conversion of demethylmenaquinol (DMKH2) to menaquinol (MKH2) and the conversion of 2-polyprenyl-6-methoxy-1,4-benzoquinol (DDMQH2) to 2-polyprenyl-3-methyl-6-methoxy-1,4-benzoquinol (DMQH2). This chain is Ubiquinone/menaquinone biosynthesis C-methyltransferase UbiE, found in Rubrivivax gelatinosus (strain NBRC 100245 / IL144).